The primary structure comprises 618 residues: Manganese lipoxygenase (618 aa).

Positions 1–16 are cleaved as a signal peptide; sequence MRSRILAIVFAARHVA. Low complexity predominate over residues 36 to 45; it reads SSTTVLPSPT. Residues 36–58 are disordered; sequence SSTTVLPSPTQYTLPNNDPNQGA. Residues 46–58 are compositionally biased toward polar residues; that stretch reads QYTLPNNDPNQGA. The Lipoxygenase domain occupies 47–618; sequence YTLPNNDPNQ…PAVNPFFLSV (572 aa). N-linked (GlcNAc...) asparagine glycans are attached at residues N60, N91, N106, N116, and N157. Mn(2+)-binding residues include H290, H294, H478, and N482. The N-linked (GlcNAc...) asparagine glycan is linked to N513. Position 618 (V618) interacts with Mn(2+).

It belongs to the lipoxygenase family. Manganese lipoxygenase subfamily. Requires Mn(2+) as cofactor. N- and O-glycosylated.

It is found in the secreted. It catalyses the reaction (9Z,12Z)-octadecadienoate + O2 = (11S)-hydroperoxy-(9Z,12Z)-octadecadienoate. The enzyme catalyses (9Z,12Z)-octadecadienoate + O2 = (13R)-hydroperoxy-(9Z,11E)-octadecadienoate. The catalysed reaction is (9Z,12Z,15Z)-octadecatrienoate + O2 = (11S)-hydroperoxy-(9Z,12Z,15Z)-octadecatrienoate. It carries out the reaction (9Z,12Z,15Z)-octadecatrienoate + O2 = (13R)-hydroperoxy-(9Z,11E,15Z)-octadecatrienoate. Lipoxygenase that metabolizes linoleic and alpha-linolenic acids to 11S- and 13R-hydroperoxy fatty acids. At the end of lipoxygenation, the intermediate product 11S-HPODE from linoleic acid is then transformed into 13R-HPODE as the final product. It also acts on alpha-linolenic acid producing 11S-HPOTrE and 13R-HPOTrE with subsequent transformation of 11S-HPOTrE to 13R-HPOTrE as final product. This Gaeumannomyces avenae (Oat take-all root rot fungus) protein is Manganese lipoxygenase.